The sequence spans 218 residues: Peptidyl-prolyl cis-trans isomerase FKBP7 (218 aa).

Residues 1–19 form the signal peptide; that stretch reads MNLLFRLAVFLSLWCCSDA. N-linked (GlcNAc...) asparagine glycans are attached at residues asparagine 41 and asparagine 128. One can recognise a PPIase FKBP-type domain in the interval 49 to 141; that stretch reads GDLLNAHYDG…MFEIELYAVT (93 aa). 2 consecutive EF-hand domains span residues 141 to 176 and 185 to 218; these read TKGPRSIETFKQIDTDNDRQLSKAEIELYLQKDFEK and YQKAVLEDIFKKNDHNGDGFISPKEYNVHQHDEL. 9 residues coordinate Ca(2+): aspartate 154, aspartate 156, aspartate 158, glutamine 160, glutamate 165, aspartate 198, asparagine 200, aspartate 202, and glutamate 209. The disordered stretch occupies residues 197 to 218; sequence NDHNGDGFISPKEYNVHQHDEL. The Prevents secretion from ER signature appears at 215–218; that stretch reads HDEL.

Glycosylated. Expressed at highest levels in heart, lung and testis. Weakly expressed in kidney and lymph node. Little or no expression detected in brain, thymus, spleen and liver.

The protein localises to the endoplasmic reticulum lumen. It catalyses the reaction [protein]-peptidylproline (omega=180) = [protein]-peptidylproline (omega=0). Its function is as follows. PPIases accelerate the folding of proteins during protein synthesis. This chain is Peptidyl-prolyl cis-trans isomerase FKBP7 (Fkbp7), found in Mus musculus (Mouse).